We begin with the raw amino-acid sequence, 292 residues long: Transmembrane and ubiquitin-like domain-containing protein 1 (292 aa).

A helical membrane pass occupies residues 11-31; it reads VTLLFGVVFLVLVLVLAWAST. The tract at residues 34–143 is disordered; the sequence is VEPPEHLLSP…TQPSAEDAAS (110 aa). Residues 71–80 are compositionally biased toward basic and acidic residues; sequence VRDEDDKSEP. Residues 84 to 94 are compositionally biased toward low complexity; the sequence is AGAAGQSADGS. One can recognise a Ubiquitin-like domain in the interval 149–222; the sequence is MVLRLKFLND…LHCHISQHAT (74 aa). 2 helical membrane passes run 237–257 and 269–289; these read VALNVGSLMVPLFVLMLSVLW and APATASLVGITIFFSFVAFGV.

It is found in the membrane. It localises to the cytoplasm. The protein localises to the nucleus. May contribute to the regulation of translation during cell-cycle progression. May contribute to the regulation of cell proliferation. The membrane form is involved in sterol-regulated ubiquitination and degradation of HMG-CoA reductase HMGCR. May be involved in centrosome assembly. This is Transmembrane and ubiquitin-like domain-containing protein 1 (tmub1) from Danio rerio (Zebrafish).